A 526-amino-acid chain; its full sequence is Reelin domain-containing protein 1 (526 aa).

Positions 1–23 (MRMQAALVGWACTTLCLASCSSA) are cleaved as a signal peptide. The region spanning 24–179 (FSHGASTVAC…SAHSDDRMEP (156 aa)) is the Reelin domain. Residues 24–443 (FSHGASTVAC…PLGIQLRTPQ (420 aa)) are Extracellular-facing. Disordered regions lie at residues 242 to 272 (DAET…PTLE), 294 to 336 (FASS…TVTQ), and 370 to 398 (LQTS…LPQS). A compositionally biased stretch (polar residues) spans 245–271 (TLSQPSSHTATEGSINQQPSGDSNPTL). Over residues 385–396 (SEASRASASFLP) the composition is skewed to polar residues. A helical transmembrane segment spans residues 444–462 (LGILLCLSATLGMALAAGL). The Cytoplasmic segment spans residues 463–526 (RYLHTQYCHQ…PSVGSKKTVL (64 aa)).

It localises to the membrane. The sequence is that of Reelin domain-containing protein 1 from Homo sapiens (Human).